A 96-amino-acid chain; its full sequence is Defensin-like protein 69 (96 aa).

An N-terminal signal peptide occupies residues 1–19; the sequence is MGSSKLLVAFTLIVMMTIS. Intrachain disulfides connect Cys-37/Cys-86, Cys-41/Cys-64, Cys-50/Cys-84, and Cys-54/Cys-85.

It belongs to the DEFL family.

It is found in the secreted. In Arabidopsis thaliana (Mouse-ear cress), this protein is Defensin-like protein 69.